The primary structure comprises 954 residues: Lysine-specific demethylase JMJ14 (954 aa).

The tract at residues 1–46 (MDQLASLAESVAMEEDSEKQSIKGESSLEPDSTPSSPKITARWNPS) is disordered. The segment covering 29-38 (EPDSTPSSPK) has biased composition (polar residues). Residues 56–97 (APIFYPTNEDFDDPLGYIEKLRSKAESYGICRIVPPVAWRPP) enclose the JmjN domain. The Nuclear localization signal 1 signature appears at 136-143 (RKRRRISK). The tract at residues 148 to 170 (RRKRDSGCDTASSGSSDSEGKFG) is disordered. The JmjC domain maps to 263 to 429 (QYSQCGWNLN…HGQNAVEGYS (167 aa)). Fe cation-binding residues include H309, E311, and H397. The Nuclear localization signal 2 signature appears at 470 to 477 (WKRVCSED). Positions 519, 522, 533, 535, 542, 545, 550, and 552 each coordinate Zn(2+). A C5HC2 zinc finger spans residues 519–571 (CFLCFYDLHMSASSCKCSPNRFACLIHAKDLCSCESKDRYILIRHTLDELWAL). The disordered stretch occupies residues 641–670 (SNKEVQLKQDGDSDVNRHGHESERNHVHGI). The segment covering 645–670 (VQLKQDGDSDVNRHGHESERNHVHGI) has biased composition (basic and acidic residues). Residues 726 to 784 (ATNRLSLSVELLSSGSLVVKKLWCSKQAIYPKGFKSRVKFLSVLDPTNLTNYISEVLDA) form the FYR N-terminal domain. In terms of domain architecture, FYR C-terminal spans 786–876 (LLGPLFRVSV…HQLEEYWNQK (91 aa)). The segment at 884–905 (EPIKEGEKDDTEKGGASDPSLD) is disordered. Basic and acidic residues predominate over residues 885 to 905 (PIKEGEKDDTEKGGASDPSLD).

The protein belongs to the JARID1 histone demethylase family. As to quaternary structure, interacts with NAC050 and NAC051/NAC052. Interacts with THAL in the nucleus. Fe(2+) is required as a cofactor. As to expression, expressed in shoot apex, primary root tip, trichomes of young leaves, leaf vascular tissues, anther filaments and styles. Detected in inflorescences, leaves, stems, roots and siliques. Mostly expressed in floral organs, and, at low levels, in other organs.

The protein resides in the nucleus. The protein localises to the nucleoplasm. The enzyme catalyses N(6),N(6),N(6)-trimethyl-L-lysyl(4)-[histone H3] + 2-oxoglutarate + O2 = N(6),N(6)-dimethyl-L-lysyl(4)-[histone H3] + formaldehyde + succinate + CO2. It catalyses the reaction N(6),N(6)-dimethyl-L-lysyl(4)-[histone H3] + 2-oxoglutarate + O2 = N(6)-methyl-L-lysyl(4)-[histone H3] + formaldehyde + succinate + CO2. The catalysed reaction is N(6)-methyl-L-lysyl(4)-[histone H3] + 2-oxoglutarate + O2 = L-lysyl(4)-[histone H3] + formaldehyde + succinate + CO2. It carries out the reaction N(6),N(6),N(6)-trimethyl-L-lysyl(4)-[histone H3] + 3 2-oxoglutarate + 3 O2 = L-lysyl(4)-[histone H3] + 3 formaldehyde + 3 succinate + 3 CO2. In terms of biological role, transcriptional repressor. Histone demethylase that demethylates 'Lys-4' (H3K4me) of histone H3 with a higher activity for H3K4me3 and H3K4me2 than H3K4me1. No activity on H3K9me3/2, H3K36me3/2 and H3K27me3/2. Function as a nocturne 'eraser' to counteract the diurnal 'writer' methylase activity of ATXR3/SDG2 thus orchestrating the circadian rhythm of histone modifications (e.g. H3K4me3) and modulating the rhythmic expression of diurnal target genes; this mechanism also relies on the circadian clock oscillators CCA1 and LHY. Involved in a negative regulation of root meristem growth upon suboptimal root growth conditions. Represses FT and TSF expression to inhibit the floral transition. Binds around the transcription start site of the FT locus. Involved in the DRM2-mediated maintenance of DNA methylation, but not required for the de novo DNA methylation. Required for demethylating histone H3K4me3 at the target of RNA silencing. Counteracts the DNA methylation of expressed transgenes; specific attenuation of transgene DNA methylation enhances the production of aberrant RNAs (e.g. uncapped and antisense) that readily induce systemic RDR6-dependent post-transcriptional transgene silencing (PTGS) spreading. Together with NAC051/NAC052 and NAC050, regulates gene expression and flowering time, probably by the promotion of RNA-mediated gene silencing. Together with JMJ16 and JMJ17, required for plant growth and development. Promotes local and systemic immunity (especially toward the bacterial pathogen Pseudomonas syringae Pst DC3000 avrRpt2) by regulating positively pathogen-induced H3K4me3 enrichment and expression of defense genes involved in salicylic acid (SA)- and pipecolic acid (Pip)-mediated defense pathways (e.g. PR1, FMO1, ALD1 and SARD4). This chain is Lysine-specific demethylase JMJ14, found in Arabidopsis thaliana (Mouse-ear cress).